The chain runs to 49 residues: MCDWKGRDNCPAPARKTSCVSRAALHSNVRWKWCEKSTLDRASNCWRGT.

This is an uncharacterized protein from Saccharomyces cerevisiae (strain ATCC 204508 / S288c) (Baker's yeast).